Here is a 61-residue protein sequence, read N- to C-terminus: Small ribosomal subunit protein uS14 (61 aa).

Positions 24, 27, 40, and 43 each coordinate Zn(2+).

It belongs to the universal ribosomal protein uS14 family. Zinc-binding uS14 subfamily. Part of the 30S ribosomal subunit. Contacts proteins S3 and S10. Zn(2+) is required as a cofactor.

In terms of biological role, binds 16S rRNA, required for the assembly of 30S particles and may also be responsible for determining the conformation of the 16S rRNA at the A site. This Clostridium perfringens (strain ATCC 13124 / DSM 756 / JCM 1290 / NCIMB 6125 / NCTC 8237 / Type A) protein is Small ribosomal subunit protein uS14.